We begin with the raw amino-acid sequence, 442 residues long: ATP-dependent RNA helicase SUB2 (442 aa).

Positions 59–87 (TGFRDFLLKPELLRAISDLGFEHPSEVQQ) match the Q motif motif. One can recognise a Helicase ATP-binding domain in the interval 90–265 (IPQAILGTDV…KKFMQSPLEI (176 aa)). 103 to 110 (AKSGMGKT) contacts ATP. The DECD box motif lies at 212–215 (DECD). The 162-residue stretch at 277–438 (GLQQFYLKLE…TLPETVDPAT (162 aa)) folds into the Helicase C-terminal domain.

The protein belongs to the DEAD box helicase family. DECD subfamily.

It localises to the nucleus. The catalysed reaction is ATP + H2O = ADP + phosphate + H(+). ATP-binding RNA helicase involved in transcription elongation and required for the export of mRNA out of the nucleus. SUB2 also plays a role in pre-mRNA splicing and spliceosome assembly. May be involved in rDNA and telomeric silencing, and maintenance of genome integrity. The polypeptide is ATP-dependent RNA helicase SUB2 (SUB2) (Cryptococcus neoformans var. neoformans serotype D (strain JEC21 / ATCC MYA-565) (Filobasidiella neoformans)).